The sequence spans 205 residues: Ribosomal RNA small subunit methyltransferase G (205 aa).

Residues G73, L78, 124 to 125, and R139 each bind S-adenosyl-L-methionine; that span reads VE.

Belongs to the methyltransferase superfamily. RNA methyltransferase RsmG family.

The protein localises to the cytoplasm. The catalysed reaction is guanosine(527) in 16S rRNA + S-adenosyl-L-methionine = N(7)-methylguanosine(527) in 16S rRNA + S-adenosyl-L-homocysteine. In terms of biological role, specifically methylates the N7 position of guanine in position 527 of 16S rRNA. This chain is Ribosomal RNA small subunit methyltransferase G, found in Erwinia tasmaniensis (strain DSM 17950 / CFBP 7177 / CIP 109463 / NCPPB 4357 / Et1/99).